Reading from the N-terminus, the 145-residue chain is uncharacterized protein (145 aa).

A helical membrane pass occupies residues 63 to 83; sequence FLCLPLFLSFLVANLILWLSF.

Its subcellular location is the mitochondrion membrane. This is an uncharacterized protein from Arabidopsis thaliana (Mouse-ear cress).